The sequence spans 468 residues: MTKSLPKDFIFGGATAAYQAEGATHTDGKGPVAWDKYLEDNYWYTAEPASDFYHKYPVDLKLAEEYGVNGIRISIAWSRIFPTGYGEVNPKGVEFYHNLFAECHKRHVEPFVTLHHFDTPEALHSNGDFLNRENIEHFVNYAAFCFEEFPEVRYWTTFNEIGPIGDGQYLVGKFPPGIQYDLAKVFQSHHNMMVSHARAVKLYKDKGYKGEIGVVHALPTKYPYDPENPADVRAAELEDIIHNKFILDATYLGHYSDVTLAGVNHILKVNGGQLDLRDEDFAALEAAKDLNDFLGINYYMSDWMRDFDGETEIIHNGKGEKGSSKYQIKGVGRRESPTHIPKTDWDWIIYPQGLYDQIMRIKKDYPNYKKIYITENGLGYKDEFVDNTVYDDARIDYVKQHLEVLSDAIVDGANVKGYFIWSLMDVFSWSNGYEKRYGLFYVDFETQERYPKKSAHWYKKLAETQMIE.

D-galactose 6-phosphate is bound by residues Gln-19, His-116, Asn-159, Glu-160, and Asn-297. Glu-160 functions as the Proton donor in the catalytic mechanism. Glu-375 serves as the catalytic Nucleophile. The D-galactose 6-phosphate site is built by Ser-428, Trp-429, Lys-435, and Tyr-437.

This sequence belongs to the glycosyl hydrolase 1 family.

It carries out the reaction a 6-phospho-beta-D-galactoside + H2O = D-galactose 6-phosphate + an alcohol. It functions in the pathway carbohydrate metabolism; lactose degradation; D-galactose 6-phosphate and beta-D-glucose from lactose 6-phosphate: step 1/1. This chain is 6-phospho-beta-galactosidase, found in Streptococcus sanguinis (strain SK36).